Reading from the N-terminus, the 218-residue chain is Ropporin-1-like protein (218 aa).

The RIIa domain occupies 17-46; it reads PELTDILKQFTKAAIRTQPADVLQWSAGYF.

This sequence belongs to the ropporin family. Component of the axonemal radial spoke complex 1 (RS1), at least composed of spoke head proteins RSPH1, RSPH3, RSPH9 and the cilia-specific component RSPH4A or sperm-specific component RSPH6A, spoke stalk proteins RSPH14, DNAJB13, DYDC1, ROPN1L and NME5, and the anchor protein IQUB. May interact with AKAP3. Interacts with FSCB; the interaction increases upon spermatozoa capacitation conditions. Interacts with CFAP61. In terms of processing, sumoylated, sumoylation decreases upon spermatozoa capacitation conditions.

The protein resides in the cell projection. The protein localises to the cilium. Its subcellular location is the flagellum. Functionally, functions as part of axonemal radial spoke complexes that play an important part in the motility of sperm and cilia. Important for male fertility. With ROPN1, involved in fibrous sheath integrity and sperm motility, plays a role in PKA-dependent signaling processes required for spermatozoa capacitation. This chain is Ropporin-1-like protein (ROPN1L), found in Bos taurus (Bovine).